Reading from the N-terminus, the 436-residue chain is MPNLYLVSLGCNKNLVDSEIMLGRLSSYNIVDKPNNADVMIVNTCGFIESAKEESVRTILELASYKKENSVLVVTGCLMQRYRDELMKELPEVDIFTGVGDYASIDEMILKKQNLFSPGVYLQKSDTKRVITGSSYHAYIKIAEGCNQKCSFCAIPTFKGKLKSRDINSIIKEVKELTKDGYSDFSFIAQDTSSFLRDAGINDGLIKLIDEVEKIEAVKSARILYLYPTTASMGLIDKIIASPKFVNYFDMPIQHINDDMLKIMRRGSSKERLKELLTKMRVAPKSFLRTGIIIGHPGETGERFDELCDFLTEFKFDRISAFAYSKEEGTLAYEMEQIPSKTITKRLNTIEKIIKKQIEGSFKSLVGEVIKVQINGSSSEGEMFFGAKSIIWDREIDGEILINDTQIKDPKVGEIYDCKINEFVKDKLIGEIICNS.

The region spanning 2–114 (PNLYLVSLGC…IDEMILKKQN (113 aa)) is the MTTase N-terminal domain. [4Fe-4S] cluster is bound by residues cysteine 11, cysteine 45, cysteine 77, cysteine 146, cysteine 150, and cysteine 153. Positions 132-363 (TGSSYHAYIK…IKKQIEGSFK (232 aa)) constitute a Radical SAM core domain. In terms of domain architecture, TRAM spans 363-434 (KSLVGEVIKV…KDKLIGEIIC (72 aa)).

It belongs to the methylthiotransferase family. RimO subfamily. [4Fe-4S] cluster serves as cofactor.

The protein resides in the cytoplasm. The catalysed reaction is L-aspartate(89)-[ribosomal protein uS12]-hydrogen + (sulfur carrier)-SH + AH2 + 2 S-adenosyl-L-methionine = 3-methylsulfanyl-L-aspartate(89)-[ribosomal protein uS12]-hydrogen + (sulfur carrier)-H + 5'-deoxyadenosine + L-methionine + A + S-adenosyl-L-homocysteine + 2 H(+). Its function is as follows. Catalyzes the methylthiolation of an aspartic acid residue of ribosomal protein uS12. In Campylobacter fetus subsp. fetus (strain 82-40), this protein is Ribosomal protein uS12 methylthiotransferase RimO.